The chain runs to 279 residues: 3-methyl-2-oxobutanoate hydroxymethyltransferase 2 (279 aa).

Mg(2+)-binding residues include D58 and D97. 3-methyl-2-oxobutanoate is bound by residues 58-59, D97, and K126; that span reads DS. A Mg(2+)-binding site is contributed by E128. The active-site Proton acceptor is E195.

It belongs to the PanB family. In terms of assembly, homodecamer; pentamer of dimers. Requires Mg(2+) as cofactor.

The protein resides in the cytoplasm. It catalyses the reaction 3-methyl-2-oxobutanoate + (6R)-5,10-methylene-5,6,7,8-tetrahydrofolate + H2O = 2-dehydropantoate + (6S)-5,6,7,8-tetrahydrofolate. The protein operates within cofactor biosynthesis; (R)-pantothenate biosynthesis; (R)-pantoate from 3-methyl-2-oxobutanoate: step 1/2. Catalyzes the reversible reaction in which hydroxymethyl group from 5,10-methylenetetrahydrofolate is transferred onto alpha-ketoisovalerate to form ketopantoate. This is 3-methyl-2-oxobutanoate hydroxymethyltransferase 2 from Methylibium petroleiphilum (strain ATCC BAA-1232 / LMG 22953 / PM1).